Consider the following 135-residue polypeptide: Large-conductance mechanosensitive channel (135 aa).

The next 2 membrane-spanning stretches (helical) occupy residues 10-30 and 76-96; these read FAMR…AAFG and GVFI…FLAI.

This sequence belongs to the MscL family. As to quaternary structure, homopentamer.

It is found in the cell inner membrane. Channel that opens in response to stretch forces in the membrane lipid bilayer. May participate in the regulation of osmotic pressure changes within the cell. In Cronobacter sakazakii (strain ATCC BAA-894) (Enterobacter sakazakii), this protein is Large-conductance mechanosensitive channel.